A 672-amino-acid chain; its full sequence is Probable copper-transporting P-type ATPase B (672 aa).

A compositionally biased stretch (basic and acidic residues) spans 1–17 (MEHHSHQEHENHTSHGN). The disordered stretch occupies residues 1–22 (MEHHSHQEHENHTSHGNHEHHH). 6 helical membrane passes run 30-50 (FFISLIFAIPIIILSPMMGVK), 55-75 (ISFTGSDWIVLILATILFFYG), 93-113 (GMMTLVALGISVAYIYSLYAF), 125-145 (TMDFFWELATLILIMLLGHWI), 282-302 (GYLFYFAVSIGLISFIVWMLI), and 313-333 (LVTVLVIACPHALGLAIPLVT). The 4-aspartylphosphate intermediate role is filled by Asp-365. Asp-563 and Asp-567 together coordinate Mg(2+). Transmembrane regions (helical) follow at residues 621 to 643 (LWWGAGYNVIAVPLAAGILASIG) and 647 to 669 (SPAVGAILMSLSTIIVAINAFTL).

Belongs to the cation transport ATPase (P-type) (TC 3.A.3) family. Type IB subfamily.

It localises to the cell membrane. The catalysed reaction is Cu(+)(in) + ATP + H2O = Cu(+)(out) + ADP + phosphate + H(+). Functionally, involved in copper transport. This Staphylococcus aureus protein is Probable copper-transporting P-type ATPase B (copB).